We begin with the raw amino-acid sequence, 117 residues long: Transcription elongation factor A protein-like 8 (117 aa).

Residues 1 to 81 (MQKSCDENEG…PEEVIRGVDE (81 aa)) are disordered. Over residues 41 to 81 (NVREETDGSLRGEPAEPSPEPKEDTPARHLNPEEVIRGVDE) the composition is skewed to basic and acidic residues. The stretch at 73 to 100 (EEVIRGVDELERLREEIRRVRNKFVLMH) forms a coiled coil.

This sequence belongs to the TFS-II family. TFA subfamily. In terms of tissue distribution, highly expressed in kidney. Moderately expressed in heart and lung. Low expression in brain and liver. Expression is up-regulated in nephrectomized kidney.

The protein localises to the nucleus. May be involved in transcriptional regulation. This Rattus norvegicus (Rat) protein is Transcription elongation factor A protein-like 8 (Tceal8).